The following is a 122-amino-acid chain: MVQMQTYLTVADNTGGKIAECIKVLGGSKKRSARVGDIIVIAVKQAIPNSPIKKGEVHKAVVVRTSKEIRRKNGTYVRFDDNACVILDANLNPRGKRVFGPVARELRDANFMKVVSLASEVI.

Belongs to the universal ribosomal protein uL14 family. In terms of assembly, part of the 50S ribosomal subunit. Forms a cluster with proteins L3 and L19. In the 70S ribosome, L14 and L19 interact and together make contacts with the 16S rRNA in bridges B5 and B8.

In terms of biological role, binds to 23S rRNA. Forms part of two intersubunit bridges in the 70S ribosome. This chain is Large ribosomal subunit protein uL14, found in Borrelia turicatae (strain 91E135).